Consider the following 73-residue polypeptide: Mucroporin-like peptide (73 aa).

An N-terminal signal peptide occupies residues 1 to 22; the sequence is MKVKCLLAVFLIVLIAAEHCQA. Lys-38 carries the post-translational modification Lysine amide. A propeptide spanning residues 44–73 is cleaved from the precursor; sequence ELGTQFQPRQKNFMRREVDLERLFAEMPDY.

It belongs to the non-disulfide-bridged peptide (NDBP) superfamily. Short antimicrobial peptide (group 4) family. As to expression, expressed by the venom gland.

It is found in the secreted. The protein localises to the target cell membrane. Cationic host defense peptide that have antibacterial activity by breaking membranes. Is more effective on Gram-positive than on Gram-negative bacteria. This chain is Mucroporin-like peptide, found in Lychas mucronatus (Chinese swimming scorpion).